A 1325-amino-acid chain; its full sequence is Cyclic nucleotide-gated channel beta-1 (1325 aa).

Disordered regions lie at residues 1 to 124 (MLGW…QVAV), 147 to 198 (PQPV…SLWL), 227 to 279 (AVLD…PGDP), 340 to 470 (WEDA…LDSC), 482 to 637 (LERT…SQNS), and 659 to 694 (KEKL…PAEA). Residues 1-732 (MLGWVQRVLP…SIDPLTNLMY (732 aa)) lie on the Cytoplasmic side of the membrane. Residues 43–81 (PQQEPEPEPEPEPEPEPEPEPEPEPEPEPEPEPVPEEAP) are compositionally biased toward acidic residues. The segment covering 105–121 (LQETQVADPAQPTSQAQ) has biased composition (polar residues). Residues 370–379 (IPRELTKIQE) show a composition bias toward basic and acidic residues. Composition is skewed to acidic residues over residues 380 to 393 (ERED…EEKE), 418 to 463 (EEKE…EEEP), and 495 to 517 (LPEE…EEKK). A compositionally biased stretch (basic and acidic residues) spans 518-527 (EEEVEKKEEG). Positions 560–571 (TLPPPERPPPSP) are enriched in pro residues. A calmodulin-binding CaM1 region spans residues 633–643 (ASQNSAIINDR). Residues 733 to 754 (ILWLFFVVLAWNWNCWLIPVRW) form a helical membrane-spanning segment. The Extracellular portion of the chain corresponds to 755–763 (AFPYQRADN). Residues 764-785 (IHFWLLMDYLCDFIYLLDITVF) traverse the membrane as a helical segment. The Cytoplasmic segment spans residues 786-800 (QMRLQFVKGGDIITD). The helical transmembrane segment at 801–820 (KKEMRNNYLKSRRFKMDLLC) threads the bilayer. At 821-836 (LLPLDFLYLKLGINPL) the chain is on the extracellular side. The helical transmembrane segment at 837-849 (LRLPRCLKYMAFF) threads the bilayer. The Cytoplasmic segment spans residues 850–861 (EFNNRLEAILSK). A helical membrane pass occupies residues 862-884 (AYVYRVIRTTAYLLYSLHLNSCL). Positions 862 to 961 (AYVYRVIRTT…IGQMRDVVGA (100 aa)) are ion conduction pathway. Residues 885 to 907 (YYWASAFQGIGSTHWVYDGVGNS) are Extracellular-facing. Helical transmembrane passes span 908-934 (YIRC…LFEI) and 935-960 (VFQL…DVVG). At 961-1325 (AATAGQTYYR…VLEEKKEGAE (365 aa)) the chain is on the cytoplasmic side. The segment at 964-1040 (AGQTYYRSCM…SIVSKVALFQ (77 aa)) is C-linker. The interval 1038 to 1142 (LFQGCDRQMI…LDKKDLNEIL (105 aa)) is cNMP-binding domain. A cyclic nucleotide-binding domain region spans residues 1044-1160 (RQMIFDMLKR…LLRKKARRML (117 aa)). G1105, E1106, S1108, R1118, and T1119 together coordinate 3',5'-cyclic GMP. Residue R1118 participates in 3',5'-cyclic AMP binding. Positions 1224–1230 (QQQLLEQ) are calmodulin-binding CaM2. The segment covering 1226–1250 (QLLEQAKSSQEAGGEEGSGATDQPA) has biased composition (low complexity). A disordered region spans residues 1226–1325 (QLLEQAKSSQ…VLEEKKEGAE (100 aa)). Pro residues predominate over residues 1262-1279 (KPPGPPEPSAQSSPPPAS).

Belongs to the cyclic nucleotide-gated cation channel (TC 1.A.1.5) family. CNGB1 subfamily. Rod outer segments. Olfactory sensory neurons.

Its subcellular location is the cell projection. The protein localises to the cilium membrane. The enzyme catalyses Ca(2+)(in) = Ca(2+)(out). It catalyses the reaction Na(+)(in) = Na(+)(out). The catalysed reaction is K(+)(in) = K(+)(out). It carries out the reaction NH4(+)(in) = NH4(+)(out). The enzyme catalyses Rb(+)(in) = Rb(+)(out). It catalyses the reaction Li(+)(in) = Li(+)(out). The catalysed reaction is Cs(+)(in) = Cs(+)(out). Its function is as follows. Pore-forming subunit of the rod cyclic nucleotide-gated channel. Mediates rod photoresponses at dim light converting transient changes in intracellular cGMP levels into electrical signals. In the dark, cGMP levels are high and keep the channel open enabling a steady inward current carried by Na(+) and Ca(2+) ions that leads to membrane depolarization and neurotransmitter release from synaptic terminals. Upon photon absorption cGMP levels decline leading to channel closure and membrane hyperpolarization that ultimately slows neurotransmitter release and signals the presence of light, the end point of the phototransduction cascade. Pore-forming subunit of the olfactory cyclic nucleotide-gated channel. Operates in the cilia of olfactory sensory neurons where chemical stimulation of the odorant is converted to an electrical signal. Mediates odorant-induced cAMP-dependent Ca(2+) influx triggering neuron depolarization. The rise of intracellular Ca(2+) levels potentiates the olfactory response by activating Ca(2+)-dependent Cl(-) channels, but it also serves as a negative feedback signal to desensitize the channel for rapid adaptation to odorants. Conducts cGMP- and cAMP-gated ion currents, with permeability for monovalent and divalent cations. The selectivity for Ca(2+) over Na(+) increases with cGMP concentrations, whereas the selectivity among monovalent ions is independent of the cGMP levels. The chain is Cyclic nucleotide-gated channel beta-1 from Mus musculus (Mouse).